The sequence spans 477 residues: Proline--tRNA ligase (477 aa).

Residues Thr111, Glu113, and Arg142 each contribute to the L-proline site. ATP is bound by residues Arg142, Thr153, Gln225, and Thr228. His230 contributes to the L-proline binding site. 2 residues coordinate ATP: Ser262 and Arg264. Residues 340 to 369 (ELKGVPFRVELGPKDLEGGQAVLASRLGGK) form an interaction with tRNA region. Cys427, Cys432, Cys458, and Cys461 together coordinate Zn(2+).

It belongs to the class-II aminoacyl-tRNA synthetase family. ProS type 3 subfamily. In terms of assembly, homodimer. Only one tRNA molecule binds per dimer.

It localises to the cytoplasm. The catalysed reaction is tRNA(Pro) + L-proline + ATP = L-prolyl-tRNA(Pro) + AMP + diphosphate. Functionally, catalyzes the attachment of proline to tRNA(Pro) in a two-step reaction: proline is first activated by ATP to form Pro-AMP and then transferred to the acceptor end of tRNA(Pro). Can inadvertently accommodate and process cysteine. This Thermus thermophilus (strain ATCC 27634 / DSM 579 / HB8) protein is Proline--tRNA ligase (proS).